The primary structure comprises 84 residues: Sporulation-specific transcription factor SpoVIF (84 aa).

It localises to the cytoplasm. Transcription factor involved in spore coat assembly and spore resistance. Required for gene regulation during the latter stages of sporulation. Regulates the transcription of at least cgeA, cotG and cotS. May directly or indirectly control the function of the GerE protein. The sequence is that of Sporulation-specific transcription factor SpoVIF from Bacillus subtilis (strain 168).